We begin with the raw amino-acid sequence, 327 residues long: Serine/threonine-protein phosphatase 4 regulatory subunit ppfr-4 (327 aa).

A coiled-coil region spans residues 141-185 (KLAVEEIRRLKLERHKKKQELKMAELRIQKQLEAVSIDEQNLREL). Residues 271–327 (KFGHNPQNAPQSSAPAGAEAQESEEEVDDDEARAKAMRWDEYKDDHRRGWGNMHNKG) form a disordered region. A compositionally biased stretch (polar residues) spans 275–284 (NPQNAPQSSA). The span at 291–301 (QESEEEVDDDE) shows a compositional bias: acidic residues. Positions 302-318 (ARAKAMRWDEYKDDHRR) are enriched in basic and acidic residues.

As to quaternary structure, serine/threonine-protein phosphatase 4 (PP4) occurs in different assemblies of the catalytic and one or more regulatory subunits. The catalytic subunit is likely to be pph-4.1.

In terms of biological role, probable regulatory subunit of serine/threonine-protein phosphatase PP4 which may play a role in meiosis and embryonic mitosis. Probably in association with catalytic subunit pph-4.1, regulates microtubule severing during oocyte meiosis II by dephosphorylating and likely activating mei-1, a component of the katanin microtubule severing complex. The chain is Serine/threonine-protein phosphatase 4 regulatory subunit ppfr-4 from Caenorhabditis elegans.